Reading from the N-terminus, the 237-residue chain is Uridylate kinase (237 aa).

12–15 (KLSG) provides a ligand contact to ATP. An involved in allosteric activation by GTP region spans residues 20–25 (GDEGFG). UMP is bound at residue Gly-54. ATP-binding residues include Gly-55 and Arg-59. UMP contacts are provided by residues Asp-74 and 135–142 (TGSPFFTT). Thr-162, Tyr-168, and Asp-171 together coordinate ATP.

It belongs to the UMP kinase family. Homohexamer.

The protein localises to the cytoplasm. It catalyses the reaction UMP + ATP = UDP + ADP. It functions in the pathway pyrimidine metabolism; CTP biosynthesis via de novo pathway; UDP from UMP (UMPK route): step 1/1. Allosterically activated by GTP. Inhibited by UTP. Catalyzes the reversible phosphorylation of UMP to UDP. This chain is Uridylate kinase, found in Actinobacillus pleuropneumoniae serotype 5b (strain L20).